The sequence spans 255 residues: 1-(5-phosphoribosyl)-5-[(5-phosphoribosylamino)methylideneamino] imidazole-4-carboxamide isomerase (255 aa).

Catalysis depends on Asp8, which acts as the Proton acceptor. Asp129 functions as the Proton donor in the catalytic mechanism.

It belongs to the HisA/HisF family.

The protein resides in the cytoplasm. It carries out the reaction 1-(5-phospho-beta-D-ribosyl)-5-[(5-phospho-beta-D-ribosylamino)methylideneamino]imidazole-4-carboxamide = 5-[(5-phospho-1-deoxy-D-ribulos-1-ylimino)methylamino]-1-(5-phospho-beta-D-ribosyl)imidazole-4-carboxamide. It functions in the pathway amino-acid biosynthesis; L-histidine biosynthesis; L-histidine from 5-phospho-alpha-D-ribose 1-diphosphate: step 4/9. In Prochlorococcus marinus subsp. pastoris (strain CCMP1986 / NIES-2087 / MED4), this protein is 1-(5-phosphoribosyl)-5-[(5-phosphoribosylamino)methylideneamino] imidazole-4-carboxamide isomerase.